The following is an 800-amino-acid chain: Nuclear cap-binding protein subunit 1 (800 aa).

Positions 1–26 (MSRRRAHDTEDEGYDHRRNKRRRVSE) are disordered. Residue threonine 9 is modified to Phosphothreonine. The MIF4G domain occupies 31–243 (EDRLESLILR…CLWAQIRKLR (213 aa)). The tract at residues 669-700 (LAKADSSSSDSEDDSSHKRKKPITHADKPSEE) is disordered.

It belongs to the NCBP1 family. In terms of assembly, component of the nuclear cap-binding complex (CBC), a heterodimer composed of Cbp80 and Cbp20 that interacts with m7GpppG-capped RNA.

Its subcellular location is the nucleus. In terms of biological role, component of the cap-binding complex (CBC), which binds cotranscriptionally to the 5'-cap of pre-mRNAs and is involved in various processes such as pre-mRNA splicing and RNA-mediated gene silencing (RNAi). The CBC complex is involved in miRNA-mediated RNA interference via its interaction with Ars2 and is required for primary microRNAs (miRNAs) processing. Also involved in innate immunity via the short interfering RNAs (siRNAs) processing machinery by restricting the viral RNA production. In the CBC complex, Cbp80 does not bind directly capped RNAs (m7GpppG-capped RNA) but is required to stabilize the movement of the N-terminal loop of Cbp20 and lock the CBC into a high affinity cap-binding state with the cap structure. The sequence is that of Nuclear cap-binding protein subunit 1 (Cbp80) from Drosophila melanogaster (Fruit fly).